The chain runs to 91 residues: Potassium channel toxin TtrKIK (91 aa).

An N-terminal signal peptide occupies residues 1-25; that stretch reads MVATNRCCVFALLFALLLVHSLTEA. The propeptide occupies 26–44; that stretch reads GKGKEVLGKIKDKLIEAKD. Residues 58–91 enclose the BetaSPN-type CS-alpha/beta domain; sequence EYACPAIEKFCEDHCAAKKAVGKCDDFKCNCIKL. 3 disulfide bridges follow: cysteine 61-cysteine 81, cysteine 68-cysteine 86, and cysteine 72-cysteine 88.

The protein belongs to the long chain scorpion toxin family. Class 2 subfamily. In terms of tissue distribution, expressed by the venom gland.

It localises to the secreted. The full peptide presents antibacterial and cytotoxic activities. The synthetic C-terminus (AA 33-76) inhibits voltage-gated potassium channels Kv1.1/KCNA1, Kv1.2/KCNA2, and Kv1.3/KCNA3. The sequence is that of Potassium channel toxin TtrKIK from Tityus trivittatus (Argentinean scorpion).